We begin with the raw amino-acid sequence, 458 residues long: Dihydrolipoyllysine-residue acetyltransferase component of pyruvate dehydrogenase complex, mitochondrial (458 aa).

The transit peptide at 1-28 (MIVPVLSRQALRHASVARVALPSLTRWY) directs the protein to the mitochondrion. Positions 34–110 (HTVVKMPALS…AVGNPIAILV (77 aa)) constitute a Lipoyl-binding domain. N6-lipoyllysine is present on K75. Residues 126–164 (DAGGETSPAVPKDEPKNESTASAPTPAPTPAPEPENTSF) form a disordered region. The Peripheral subunit-binding (PSBD) domain occupies 177–214 (NALPAAKRLAREKGIDLRNVKGSGPGGKITEEDVKKAL). Catalysis depends on residues H431 and D435.

This sequence belongs to the 2-oxoacid dehydrogenase family. The cofactor is (R)-lipoate.

It is found in the mitochondrion matrix. It carries out the reaction N(6)-[(R)-dihydrolipoyl]-L-lysyl-[protein] + acetyl-CoA = N(6)-[(R)-S(8)-acetyldihydrolipoyl]-L-lysyl-[protein] + CoA. Functionally, the pyruvate dehydrogenase complex catalyzes the overall conversion of pyruvate to acetyl-CoA and CO(2). It contains multiple copies of three enzymatic components: pyruvate dehydrogenase (E1), dihydrolipoamide acetyltransferase (E2) and lipoamide dehydrogenase (E3). This Neurospora crassa (strain ATCC 24698 / 74-OR23-1A / CBS 708.71 / DSM 1257 / FGSC 987) protein is Dihydrolipoyllysine-residue acetyltransferase component of pyruvate dehydrogenase complex, mitochondrial (mrp-3).